The chain runs to 204 residues: Ribosome maturation factor RimP (204 aa).

Residues 176–204 (GNFDESQFDEIEESEGEEADEAEQPPTKH) are disordered. Acidic residues predominate over residues 181 to 198 (SQFDEIEESEGEEADEAE).

It belongs to the RimP family.

The protein localises to the cytoplasm. In terms of biological role, required for maturation of 30S ribosomal subunits. The chain is Ribosome maturation factor RimP from Cereibacter sphaeroides (strain KD131 / KCTC 12085) (Rhodobacter sphaeroides).